We begin with the raw amino-acid sequence, 53 residues long: UPF0391 membrane protein ETA_06630 (53 aa).

2 consecutive transmembrane segments (helical) span residues 4–24 (WGII…GGLA) and 27–47 (AAWA…ISLF).

It belongs to the UPF0391 family.

The protein localises to the cell membrane. The protein is UPF0391 membrane protein ETA_06630 of Erwinia tasmaniensis (strain DSM 17950 / CFBP 7177 / CIP 109463 / NCPPB 4357 / Et1/99).